Reading from the N-terminus, the 67-residue chain is Large ribosomal subunit protein bL32 (67 aa).

Residues 1–19 (MAVPKRKQSRANTHARRSQ) are compositionally biased toward basic residues. Positions 1–20 (MAVPKRKQSRANTHARRSQW) are disordered.

Belongs to the bacterial ribosomal protein bL32 family.

The sequence is that of Large ribosomal subunit protein bL32 from Leifsonia xyli subsp. xyli (strain CTCB07).